The sequence spans 182 residues: Probable RNA 2'-phosphotransferase (182 aa).

The protein belongs to the KptA/TPT1 family.

Functionally, removes the 2'-phosphate from RNA via an intermediate in which the phosphate is ADP-ribosylated by NAD followed by a presumed transesterification to release the RNA and generate ADP-ribose 1''-2''-cyclic phosphate (APPR&gt;P). May function as an ADP-ribosylase. This chain is Probable RNA 2'-phosphotransferase, found in Pseudomonas fluorescens (strain ATCC BAA-477 / NRRL B-23932 / Pf-5).